The sequence spans 352 residues: Photosystem II protein D1 (352 aa).

T2 carries the N-acetylthreonine modification. T2 is modified (phosphothreonine). 3 helical membrane passes run 29–46, 118–133, and 142–156; these read YIGW…TATS, HFLL…EWEL, and WIAV…AATA. H118 serves as a coordination point for chlorophyll a. A pheophytin a-binding site is contributed by Y126. Residues D170 and E189 each contribute to the [CaMn4O5] cluster site. Residues 197 to 218 form a helical membrane-spanning segment; that stretch reads FHMLGVAGVFGGSLFSAMHGSL. H198 contacts chlorophyll a. A quinone contacts are provided by residues H215 and 264-265; that span reads SF. H215 lines the Fe cation pocket. H272 serves as a coordination point for Fe cation. The chain crosses the membrane as a helical span at residues 274–288; it reads FLAAWPVVGIWFTAL. [CaMn4O5] cluster is bound by residues H332, E333, D342, and A344. Positions 345–352 are excised as a propeptide; it reads SVEAPVVG.

Belongs to the reaction center PufL/M/PsbA/D family. In terms of assembly, PSII is composed of 1 copy each of membrane proteins PsbA, PsbB, PsbC, PsbD, PsbE, PsbF, PsbH, PsbI, PsbJ, PsbK, PsbL, PsbM, PsbT, PsbX, PsbY, PsbZ, Psb30/Ycf12, at least 3 peripheral proteins of the oxygen-evolving complex and a large number of cofactors. It forms dimeric complexes. The D1/D2 heterodimer binds P680, chlorophylls that are the primary electron donor of PSII, and subsequent electron acceptors. It shares a non-heme iron and each subunit binds pheophytin, quinone, additional chlorophylls, carotenoids and lipids. D1 provides most of the ligands for the Mn4-Ca-O5 cluster of the oxygen-evolving complex (OEC). There is also a Cl(-1) ion associated with D1 and D2, which is required for oxygen evolution. The PSII complex binds additional chlorophylls, carotenoids and specific lipids. serves as cofactor. Tyr-161 forms a radical intermediate that is referred to as redox-active TyrZ, YZ or Y-Z. Post-translationally, C-terminally processed by CTPA; processing is essential to allow assembly of the oxygen-evolving complex and thus photosynthetic growth.

Its subcellular location is the plastid. It localises to the chloroplast thylakoid membrane. It carries out the reaction 2 a plastoquinone + 4 hnu + 2 H2O = 2 a plastoquinol + O2. In terms of biological role, photosystem II (PSII) is a light-driven water:plastoquinone oxidoreductase that uses light energy to abstract electrons from H(2)O, generating O(2) and a proton gradient subsequently used for ATP formation. It consists of a core antenna complex that captures photons, and an electron transfer chain that converts photonic excitation into a charge separation. The D1/D2 (PsbA/PsbD) reaction center heterodimer binds P680, the primary electron donor of PSII as well as several subsequent electron acceptors. This Zygnema circumcarinatum (Green alga) protein is Photosystem II protein D1.